The chain runs to 198 residues: Urease accessory protein UreE (198 aa).

The disordered stretch occupies residues 137–198; the sequence is ARGAYHSPGG…RGHDHDHKHD (62 aa). Basic and acidic residues predominate over residues 149–198; sequence HGHDHDHNHDHGHDHAHDHNHGHDHDHEHGYEHEHEHRHDRGHDHDHKHD.

The protein belongs to the UreE family.

The protein localises to the cytoplasm. Involved in urease metallocenter assembly. Binds nickel. Probably functions as a nickel donor during metallocenter assembly. The protein is Urease accessory protein UreE of Rhizobium johnstonii (strain DSM 114642 / LMG 32736 / 3841) (Rhizobium leguminosarum bv. viciae).